Reading from the N-terminus, the 208-residue chain is Casparian strip membrane protein 2 (208 aa).

The segment at methionine 1–lysine 23 is disordered. Residues methionine 1 to glycine 46 lie on the Cytoplasmic side of the membrane. Polar residues predominate over residues serine 8–asparagine 18. The helical transmembrane segment at valine 47–alanine 67 threads the bilayer. Residues threonine 68–threonine 96 lie on the Extracellular side of the membrane. A helical transmembrane segment spans residues phenylalanine 97–isoleucine 117. Topologically, residues alanine 118–lysine 129 are cytoplasmic. Residues leucine 130–alanine 150 form a helical membrane-spanning segment. Residues alanine 151–valine 184 are Extracellular-facing. A helical transmembrane segment spans residues valine 185 to isoleucine 205. The Cytoplasmic portion of the chain corresponds to arginine 206–histidine 208.

The protein belongs to the Casparian strip membrane proteins (CASP) family. In terms of assembly, homodimer and heterodimers.

It localises to the cell membrane. In terms of biological role, regulates membrane-cell wall junctions and localized cell wall deposition. Required for establishment of the Casparian strip membrane domain (CSD) and the subsequent formation of Casparian strips, a cell wall modification of the root endodermis that determines an apoplastic barrier between the intraorganismal apoplasm and the extraorganismal apoplasm and prevents lateral diffusion. This is Casparian strip membrane protein 2 from Triphysaria pusilla (Dwarf owl's-clover).